Here is a 65-residue protein sequence, read N- to C-terminus: UPF0434 protein VFMJ11_A0475 (65 aa).

The protein belongs to the UPF0434 family.

In Aliivibrio fischeri (strain MJ11) (Vibrio fischeri), this protein is UPF0434 protein VFMJ11_A0475.